We begin with the raw amino-acid sequence, 614 residues long: DNA ligase (614 aa).

NAD(+) is bound by residues 29–33 (DQDYD) and 73–74 (SI). Residue lysine 111 is the N6-AMP-lysine intermediate of the active site. 3 residues coordinate NAD(+): arginine 127, glutamate 158, and lysine 270. The Zn(2+) site is built by cysteine 358, cysteine 361, cysteine 374, and cysteine 380. A BRCT domain is found at 538-614 (TLTHELFDKK…MTETDYLSKI (77 aa)).

It belongs to the NAD-dependent DNA ligase family. LigA subfamily. Mg(2+) is required as a cofactor. The cofactor is Mn(2+).

It carries out the reaction NAD(+) + (deoxyribonucleotide)n-3'-hydroxyl + 5'-phospho-(deoxyribonucleotide)m = (deoxyribonucleotide)n+m + AMP + beta-nicotinamide D-nucleotide.. Functionally, DNA ligase that catalyzes the formation of phosphodiester linkages between 5'-phosphoryl and 3'-hydroxyl groups in double-stranded DNA using NAD as a coenzyme and as the energy source for the reaction. It is essential for DNA replication and repair of damaged DNA. This chain is DNA ligase, found in Ruthia magnifica subsp. Calyptogena magnifica.